We begin with the raw amino-acid sequence, 669 residues long: Cysteine-rich receptor-like protein kinase 10 (669 aa).

The N-terminal stretch at 1–34 (MRRNTDQESPIMSYYSSFFFLFLFSFLTSFRVSA) is a signal peptide. Residues 35-285 (QDPTYVYHTC…PRSGKDGNSK (251 aa)) lie on the Extracellular side of the membrane. Gnk2-homologous domains follow at residues 38–142 (TYVY…NQNI) and 148–252 (TTGG…IYAF). 4 N-linked (GlcNAc...) asparagine glycosylation sites follow: N49, N53, N71, and N80. Disulfide bonds link C96-C105 and C108-C133. 4 N-linked (GlcNAc...) asparagine glycosylation sites follow: N114, N159, N185, and N196. Cystine bridges form between C209-C218 and C221-C243. Positions 260–274 (PPPPPPSISTPPVSA) are enriched in pro residues. A disordered region spans residues 260 to 280 (PPPPPPSISTPPVSAPPRSGK). A helical transmembrane segment spans residues 286–306 (VLVIAIVVPIIVAVLLFIAGY). Residues 307–669 (CFLTRRARKS…DASITDIHPR (363 aa)) are Cytoplasmic-facing. The Protein kinase domain occupies 348 to 634 (FVESNKIGQG…TLPVPRQPGL (287 aa)). ATP-binding positions include 354-362 (IGQGGFGEV) and K376. Y421 carries the post-translational modification Phosphotyrosine. D473 acts as the Proton acceptor in catalysis. At S477 the chain carries Phosphoserine. The residue at position 513 (T513) is a Phosphothreonine. Position 521 is a phosphotyrosine (Y521).

This sequence belongs to the protein kinase superfamily. Ser/Thr protein kinase family. CRK subfamily. Interacts with CRKIP1 (KAPP), CRKIP2 and CRKIP3, three kinase-associated type 2C proteins.

Its subcellular location is the membrane. The catalysed reaction is L-seryl-[protein] + ATP = O-phospho-L-seryl-[protein] + ADP + H(+). The enzyme catalyses L-threonyl-[protein] + ATP = O-phospho-L-threonyl-[protein] + ADP + H(+). In Arabidopsis thaliana (Mouse-ear cress), this protein is Cysteine-rich receptor-like protein kinase 10 (CRK10).